The sequence spans 313 residues: D-alanine--D-alanine ligase (313 aa).

In terms of domain architecture, ATP-grasp spans 111-306; the sequence is KQVWHSLGLP…FQQLVLAILA (196 aa). Residue 137 to 192 coordinates ATP; that stretch reads AAELGFPLIVKPAHEGSSIGMAKVESVEALIAAWQDAARYDSQVLVEQWIAGPEYT. Mg(2+) contacts are provided by aspartate 260, glutamate 273, and asparagine 275.

This sequence belongs to the D-alanine--D-alanine ligase family. The cofactor is Mg(2+). It depends on Mn(2+) as a cofactor.

The protein localises to the cytoplasm. The enzyme catalyses 2 D-alanine + ATP = D-alanyl-D-alanine + ADP + phosphate + H(+). It functions in the pathway cell wall biogenesis; peptidoglycan biosynthesis. Cell wall formation. The protein is D-alanine--D-alanine ligase of Ectopseudomonas mendocina (strain ymp) (Pseudomonas mendocina).